The sequence spans 637 residues: Chaperone protein DnaK (637 aa).

Threonine 198 is subject to Phosphothreonine; by autocatalysis. Residues 601–615 (AQQKAQAEQAGADAG) show a composition bias toward low complexity. The tract at residues 601–637 (AQQKAQAEQAGADAGEQPKQDDDVVDAEFEEVKEDKK) is disordered. Residues 623–637 (DVVDAEFEEVKEDKK) are compositionally biased toward acidic residues.

This sequence belongs to the heat shock protein 70 family.

Acts as a chaperone. The protein is Chaperone protein DnaK of Vibrio atlanticus (strain LGP32) (Vibrio splendidus (strain Mel32)).